A 250-amino-acid chain; its full sequence is Ubiquinone/menaquinone biosynthesis C-methyltransferase UbiE (250 aa).

S-adenosyl-L-methionine-binding positions include threonine 73, aspartate 94, and aspartate 122 to alanine 123.

This sequence belongs to the class I-like SAM-binding methyltransferase superfamily. MenG/UbiE family.

It carries out the reaction a 2-demethylmenaquinol + S-adenosyl-L-methionine = a menaquinol + S-adenosyl-L-homocysteine + H(+). It catalyses the reaction a 2-methoxy-6-(all-trans-polyprenyl)benzene-1,4-diol + S-adenosyl-L-methionine = a 5-methoxy-2-methyl-3-(all-trans-polyprenyl)benzene-1,4-diol + S-adenosyl-L-homocysteine + H(+). It functions in the pathway quinol/quinone metabolism; menaquinone biosynthesis; menaquinol from 1,4-dihydroxy-2-naphthoate: step 2/2. Its pathway is cofactor biosynthesis; ubiquinone biosynthesis. Functionally, methyltransferase required for the conversion of demethylmenaquinol (DMKH2) to menaquinol (MKH2) and the conversion of 2-polyprenyl-6-methoxy-1,4-benzoquinol (DDMQH2) to 2-polyprenyl-3-methyl-6-methoxy-1,4-benzoquinol (DMQH2). The polypeptide is Ubiquinone/menaquinone biosynthesis C-methyltransferase UbiE (Coxiella burnetii (strain RSA 331 / Henzerling II)).